Reading from the N-terminus, the 513-residue chain is Histone acetyltransferase KAT5 (513 aa).

Positions 8 to 65 (IEGCRLPVLRRNQDNEDEWPLAEILSVKDISGRKLFYVHYIDFNKRLDEWVTHERLDL) constitute a Tudor-knot domain. K52 bears the N6-acetyllysine mark. A disordered region spans residues 69 to 106 (QFPKKEAKTPTKNGLPGSRPGSPEREVPASAQASGKTL). S86 is modified (phosphoserine). At S90 the chain carries Phosphoserine; by CDK1 and CDK9. An N6-acetyllysine; by autocatalysis mark is found at K104 and K120. Positions 122-217 (REAIPGGEPD…SAPRMTGSLV (96 aa)) are disordered. The span at 133-144 (PLSSSSCLQPNH) shows a compositional bias: polar residues. 4 positions are modified to N6-acetyllysine; by autocatalysis: K148, K150, K187, and K189. S199 is modified (phosphoserine). In terms of domain architecture, MYST-type HAT spans 227 to 504 (TRMKNIECIE…IDSKCLHFTP (278 aa)). The C2HC MYST-type zinc finger occupies 260 to 285 (LYLCEFCLKYGRSLKCLQRHLTKCDL). The residue at position 327 (K327) is an N6-acetyllysine; by autocatalysis. The segment at 368 to 513 (ACILTLPPYQ…PKDWSKRGKW (146 aa)) is interaction with ATF2. Residues 370–372 (ILT) and 377–383 (QRRGYGK) contribute to the acetyl-CoA site. E403 serves as the catalytic Proton donor/acceptor. Acetyl-CoA contacts are provided by S407 and S416. K430 is covalently cross-linked (Glycyl lysine isopeptide (Lys-Gly) (interchain with G-Cter in SUMO1); alternate). K430 participates in a covalent cross-link: Glycyl lysine isopeptide (Lys-Gly) (interchain with G-Cter in SUMO2); alternate. Residue K451 forms a Glycyl lysine isopeptide (Lys-Gly) (interchain with G-Cter in SUMO1) linkage.

The protein belongs to the MYST (SAS/MOZ) family. As to quaternary structure, component of the NuA4 histone acetyltransferase complex which contains the catalytic subunit KAT5/TIP60 and the subunits EP400, TRRAP/PAF400, BRD8/SMAP, EPC1, DMAP1/DNMAP1, RUVBL1/TIP49, RUVBL2, ING3, actin, ACTL6A/BAF53A, MORF4L1/MRG15, MORF4L2/MRGX, MRGBP, YEATS4/GAS41, VPS72/YL1 and MEAF6. KAT5/TIP60, EPC1, and ING3 together constitute a minimal HAT complex termed Piccolo NuA4. The NuA4 complex interacts with MYC. Interacts with ATM. Interacts with JADE1. Interacts with PLA2G4A/CPLA2, EDNRA and HDAC7. Interacts with the cytoplasmic tail of APP and APBB1/FE65. Interacts with TRIM24 and TRIM68. Forms a complex with SENP6 and UBE2I in response to UV irradiation. Identified in a complex with HINT1. Interacts with ATF2 and CUL3. Interacts with NR1D2 (via N-terminus). Component of a SWR1-like complex. Interacts with FOXP3. Interacts with ZBTB49. Interacts with SRF. Interacts with ATF3; promoting autoacetylation and deubiquitination by USP7. Interacts with EP300/p300; interaction promotes KAT5 autoacetylation. Interacts with PRKDC; interaction is impaired following KAT5 sumoylation. Interacts with GPR50. Interacts with NME3; this interaction enables recruitment of NME3 at DNA damage sites where it plays a role in the repair of DNA. Phosphorylated on Ser-86 and Ser-90; enhanced during G2/M phase. The phosphorylated form has a higher activity. Phosphorylation at Ser-90 by CDK1 or CDK9 is a prerequisite for phosphorylation at Ser-86 by GSK3. Phosphorylation at Ser-86 by GSK3 (GSK3A or GSK3B) activates acetyltransferase and acyltransferase activity. Phosphorylation at Ser-90 by CDK9 promotes KAT5 recruitment to chromatin. Phosphorylation by VRK1 following DNA damage promotes KAT5 association with chromatin and histone acetyltransferase activity. In terms of processing, autoacetylated. Autoacetylation is required for histone acetyltransferase activity. Autoacetylation at Lys-327 is facilitated by interaction with EP300/p300: it prevents ubiquitination and subsequent degradation by the proteasome and promotes acetylation of target proteins. Deacetylated by HDAC3 and SIRT1. Deacetylation by HDAC3 promotes its ubiquitination and cytoplasmic localization. Post-translationally, sumoylated by UBE2I at Lys-430 and Lys-451, leading to increase of its histone acetyltransferase activity in UV-induced DNA damage response, as well as its translocation to nuclear bodies. Sumoylation with SUMO2 by PIAS4 at Lys-430 promotes repair of DNA double-strand breaks (DSBs) via homologous recombination (HR). Sumoylation by PIAS4 impairs interaction with PRKDC, inhibiting non-homologous end joining (NHEJ)-mediated repair of DSBs, thereby facilitating HR. Desumoylated by SENP3. Ubiquitinated by MDM2, leading to its proteasome-dependent degradation. Ubiquitination is prevented by autoacetylation at Lys-327. Ubiquitinated following deacetylation by HDAC3, leading to cytoplasmic localization. Deubiquitinated by USP7 following interaction with ATF3, promoting its stabilization. As to expression, expressed in testis, heart, brain, kidney and liver. Weakly expressed in lung.

The protein localises to the nucleus. It localises to the chromosome. Its subcellular location is the cytoplasm. It is found in the centromere. The protein resides in the kinetochore. The protein localises to the cytoskeleton. It localises to the spindle pole. Its subcellular location is the nucleolus. It is found in the perinuclear region. The enzyme catalyses L-lysyl-[histone] + acetyl-CoA = N(6)-acetyl-L-lysyl-[histone] + CoA + H(+). It carries out the reaction L-lysyl-[protein] + acetyl-CoA = N(6)-acetyl-L-lysyl-[protein] + CoA + H(+). It catalyses the reaction (2E)-butenoyl-CoA + L-lysyl-[protein] = N(6)-(2E)-butenoyl-L-lysyl-[protein] + CoA + H(+). The catalysed reaction is 2-hydroxyisobutanoyl-CoA + L-lysyl-[protein] = N(6)-(2-hydroxyisobutanoyl)-L-lysyl-[protein] + CoA + H(+). The enzyme catalyses (S)-lactoyl-CoA + L-lysyl-[protein] = N(6)-[(S)-lactoyl]-L-lysyl-[protein] + CoA + H(+). With respect to regulation, acyltransferase and acetyltransferase activities are activated by phosphorylation and autoacetylation. Autoacetylation activates the histone acetyltransferase activity. Its function is as follows. Catalytic subunit of the NuA4 histone acetyltransferase complex, a multiprotein complex involved in transcriptional activation of select genes principally by acetylation of nucleosomal histones H2A and H4. Histone acetylation alters nucleosome-DNA interactions and promotes interaction of the modified histones with other proteins which positively regulate transcription. The NuA4 histone acetyltransferase complex is required for the activation of transcriptional programs associated with proto-oncogene mediated growth induction, tumor suppressor mediated growth arrest and replicative senescence, apoptosis, and DNA repair. The NuA4 complex plays a direct role in repair of DNA double-strand breaks (DSBs) by promoting homologous recombination (HR): the complex inhibits TP53BP1 binding to chromatin via MBTD1, which recognizes and binds histone H4 trimethylated at 'Lys-20' (H4K20me), and KAT5 that catalyzes acetylation of 'Lys-15' of histone H2A (H2AK15ac), thereby blocking the ubiquitination mark required for TP53BP1 localization at DNA breaks. Also involved in DSB repair by mediating acetylation of 'Lys-5' of histone H2AX (H2AXK5ac), promoting NBN/NBS1 assembly at the sites of DNA damage. The NuA4 complex plays a key role in hematopoietic stem cell maintenance and is required to maintain acetylated H2A.Z/H2AZ1 at MYC target genes. The NuA4 complex is also required for spermatid development by promoting acetylation of histones: histone hyperacetylation is required for histone replacement during the transition from round to elongating spermatids. Component of a SWR1-like complex that specifically mediates the removal of histone H2A.Z/H2AZ1 from the nucleosome. Also acetylates non-histone proteins, such as BMAL1, ATM, AURKB, CHKA, CGAS, ERCC4/XPF, LPIN1, TP53/p53, NDC80/HEC1, NR1D2, RAN, SOX4, FOXP3, SQSTM1, ULK1 and RUBCNL/Pacer. Directly acetylates and activates ATM. Promotes nucleotide excision repair (NER) by mediating acetylation of ERCC4/XPF, thereby promoting formation of the ERCC4-ERCC1 complex. Relieves NR1D2-mediated inhibition of APOC3 expression by acetylating NR1D2. Acts as a regulator of regulatory T-cells (Treg) by catalyzing FOXP3 acetylation, thereby promoting FOXP3 transcriptional repressor activity. Involved in skeletal myoblast differentiation by mediating acetylation of SOX4. Catalyzes acetylation of APBB1/FE65, increasing its transcription activator activity. Promotes transcription elongation during the activation phase of the circadian cycle by catalyzing acetylation of BMAL1, promoting elongation of circadian transcripts. Together with GSK3 (GSK3A or GSK3B), acts as a regulator of autophagy: phosphorylated at Ser-86 by GSK3 under starvation conditions, leading to activate acetyltransferase activity and promote acetylation of key autophagy regulators, such as ULK1 and RUBCNL/Pacer. Acts as a regulator of the cGAS-STING innate antiviral response by catalyzing acetylation the N-terminus of CGAS, thereby promoting CGAS DNA-binding and activation. Also regulates lipid metabolism by mediating acetylation of CHKA or LPIN1. Promotes lipolysis of lipid droplets following glucose deprivation by mediating acetylation of isoform 1 of CHKA, thereby promoting monomerization of CHKA and its conversion into a tyrosine-protein kinase. Acts as a regulator of fatty-acid-induced triacylglycerol synthesis by catalyzing acetylation of LPIN1, thereby promoting the synthesis of diacylglycerol. In addition to protein acetyltransferase, can use different acyl-CoA substrates, such as (2E)-butenoyl-CoA (crotonyl-CoA), S-lactoyl-CoA (lactyl-CoA) and 2-hydroxyisobutanoyl-CoA (2-hydroxyisobutyryl-CoA), and is able to mediate protein crotonylation, lactylation and 2-hydroxyisobutyrylation, respectively. Acts as a key regulator of chromosome segregation and kinetochore-microtubule attachment during mitosis by mediating acetylation or crotonylation of target proteins. Catalyzes acetylation of AURKB at kinetochores, increasing AURKB activity and promoting accurate chromosome segregation in mitosis. Acetylates RAN during mitosis, promoting microtubule assembly at mitotic chromosomes. Acetylates NDC80/HEC1 during mitosis, promoting robust kinetochore-microtubule attachment. Catalyzes crotonylation of MAPRE1/EB1, thereby ensuring accurate spindle positioning in mitosis. Catalyzes lactylation of NBN/NBS1 in response to DNA damage, thereby promoting DNA double-strand breaks (DSBs) via homologous recombination (HR). This is Histone acetyltransferase KAT5 from Mus musculus (Mouse).